We begin with the raw amino-acid sequence, 380 residues long: MLKRCGRRLLLALAGALLACLLVLTADPPPPPVPAERGRRALRSLAGPSGVATAPGLEAAAAAAPGAPVREVHSLSEYFSLLTRSRRDVGPPPGGAPRPADGPPRPLAEPLAPRDVFIAVKTTKKFHRARLDLLLETWISRHEEMTFIFTDGEDEALARRTGHVVNTNCSAAHSRQALSCKMAVEYDRFIESGRKWFCHVDDDNYVNVRALLRLLGSYPHTQDVYLGKPSLDRPIQATERVSENKVRPVHFWFATGGAGFCISRGLALKMSPWASGGHFMSTAERIRLPDDCTIGYIVEALLGVPLVRCGLFHSHLENLQQVPASELHEQVTLSYGMFENKRNSVHIKGPFSVEADPSRFRSVHCHLYPDTSWCPRSAIF.

At 1–8 the chain is on the cytoplasmic side; it reads MLKRCGRR. Residues 9 to 29 form a helical; Signal-anchor for type II membrane protein membrane-spanning segment; that stretch reads LLLALAGALLACLLVLTADPP. Over 30-380 the chain is Lumenal; that stretch reads PPPVPAERGR…TSWCPRSAIF (351 aa). The tract at residues 85 to 110 is disordered; the sequence is SRRDVGPPPGGAPRPADGPPRPLAEP. Residues 90–107 show a composition bias toward pro residues; that stretch reads GPPPGGAPRPADGPPRPL. A substrate-binding site is contributed by R130. N-linked (GlcNAc...) asparagine glycosylation occurs at N168. 2 disulfide bridges follow: C169-C180 and C198-C261. D202 provides a ligand contact to substrate. D203 is a Mn(2+) binding site. D291 is a catalytic residue. Residue H315 coordinates Mn(2+). C365 and C374 are disulfide-bonded.

It belongs to the glycosyltransferase 31 family. The cofactor is Mn(2+). Co(2+) serves as cofactor. In terms of processing, a soluble form may be derived from the membrane form by proteolytic processing.

It is found in the golgi apparatus. The protein localises to the golgi apparatus membrane. It catalyses the reaction 3-O-(alpha-L-fucosyl)-L-threonyl-[EGF-like domain protein] + UDP-N-acetyl-alpha-D-glucosamine = 3-O-(N-acetyl-beta-D-glucosaminyl-(1-&gt;3)-alpha-L-fucosyl)-L-threonyl-[EGF-like domain protein] + UDP + H(+). The enzyme catalyses 3-O-(alpha-L-fucosyl)-L-seryl-[EGF-like domain protein] + UDP-N-acetyl-alpha-D-glucosamine = 3-O-(N-acetyl-beta-D-glucosaminyl-(1-&gt;3)-alpha-L-fucosyl)-L-seryl-[EGF-like domain protein] + UDP + H(+). Functionally, glycosyltransferase that initiates the elongation of O-linked fucose residues attached to EGF-like repeats in the extracellular domain of Notch molecules. Modulates NOTCH1 activity by modifying O-fucose residues at specific EGF-like domains resulting in inhibition of NOTCH1 activation by JAG1 and enhancement of NOTCH1 activation by DLL1 via an increase in its binding to DLL1. Decreases the binding of JAG1 to NOTCH2 but not that of DLL1. Essential mediator of somite segmentation and patterning. The polypeptide is Beta-1,3-N-acetylglucosaminyltransferase lunatic fringe (LFNG) (Bos taurus (Bovine)).